Reading from the N-terminus, the 443-residue chain is ATP-dependent protease ATPase subunit HslU (443 aa).

ATP is bound by residues Ile-18, 60-65, Asp-256, Glu-321, and Arg-393; that span reads GVGKTE.

Belongs to the ClpX chaperone family. HslU subfamily. In terms of assembly, a double ring-shaped homohexamer of HslV is capped on each side by a ring-shaped HslU homohexamer. The assembly of the HslU/HslV complex is dependent on binding of ATP.

It is found in the cytoplasm. Its function is as follows. ATPase subunit of a proteasome-like degradation complex; this subunit has chaperone activity. The binding of ATP and its subsequent hydrolysis by HslU are essential for unfolding of protein substrates subsequently hydrolyzed by HslV. HslU recognizes the N-terminal part of its protein substrates and unfolds these before they are guided to HslV for hydrolysis. The chain is ATP-dependent protease ATPase subunit HslU from Tolumonas auensis (strain DSM 9187 / NBRC 110442 / TA 4).